A 338-amino-acid polypeptide reads, in one-letter code: 1-aminocyclopropane-1-carboxylate deaminase (338 aa).

N6-(pyridoxal phosphate)lysine is present on lysine 51. Serine 78 acts as the Nucleophile in catalysis.

This sequence belongs to the ACC deaminase/D-cysteine desulfhydrase family. As to quaternary structure, homotrimer. Requires pyridoxal 5'-phosphate as cofactor.

The catalysed reaction is 1-aminocyclopropane-1-carboxylate + H2O = 2-oxobutanoate + NH4(+). Catalyzes a cyclopropane ring-opening reaction, the irreversible conversion of 1-aminocyclopropane-1-carboxylate (ACC) to ammonia and alpha-ketobutyrate. Allows growth on ACC as a nitrogen source. In Pseudomonas sp. (strain ACP), this protein is 1-aminocyclopropane-1-carboxylate deaminase.